The primary structure comprises 79 residues: Sec-independent protein translocase protein TatA (79 aa).

The chain crosses the membrane as a helical span at residues 1–21; the sequence is MGSLSIWHWLIVLLIVALVFG. Residues 46–79 are disordered; sequence ADAPAAEAQQRELPRNGAVDVEAKEKTPRSGDYR. Residues 66–79 show a composition bias toward basic and acidic residues; the sequence is VEAKEKTPRSGDYR.

It belongs to the TatA/E family. The Tat system comprises two distinct complexes: a TatABC complex, containing multiple copies of TatA, TatB and TatC subunits, and a separate TatA complex, containing only TatA subunits. Substrates initially bind to the TatABC complex, which probably triggers association of the separate TatA complex to form the active translocon.

It is found in the cell inner membrane. Its function is as follows. Part of the twin-arginine translocation (Tat) system that transports large folded proteins containing a characteristic twin-arginine motif in their signal peptide across membranes. TatA could form the protein-conducting channel of the Tat system. The sequence is that of Sec-independent protein translocase protein TatA from Paraburkholderia phytofirmans (strain DSM 17436 / LMG 22146 / PsJN) (Burkholderia phytofirmans).